The primary structure comprises 190 residues: Potassium-transporting ATPase KdpC subunit (190 aa).

The helical transmembrane segment at 7 to 27 (PALLMLLVWTLITGVFYPVLV) threads the bilayer.

This sequence belongs to the KdpC family. As to quaternary structure, the system is composed of three essential subunits: KdpA, KdpB and KdpC.

The protein resides in the cell inner membrane. Functionally, part of the high-affinity ATP-driven potassium transport (or Kdp) system, which catalyzes the hydrolysis of ATP coupled with the electrogenic transport of potassium into the cytoplasm. This subunit acts as a catalytic chaperone that increases the ATP-binding affinity of the ATP-hydrolyzing subunit KdpB by the formation of a transient KdpB/KdpC/ATP ternary complex. This chain is Potassium-transporting ATPase KdpC subunit, found in Methylococcus capsulatus (strain ATCC 33009 / NCIMB 11132 / Bath).